Reading from the N-terminus, the 480-residue chain is tRNA-2-methylthio-N(6)-dimethylallyladenosine synthase (480 aa).

The 117-residue stretch at 29 to 145 folds into the MTTase N-terminal domain; sequence GSFWIQTFGC…LEALLTQVDN (117 aa). The [4Fe-4S] cluster site is built by Cys38, Cys74, Cys108, Cys180, Cys184, and Cys187. Positions 166–403 constitute a Radical SAM core domain; the sequence is RDSTICAWVN…NALVERVALQ (238 aa). One can recognise a TRAM domain in the interval 406 to 474; that stretch reads SRYSGKVEQV…AFSLSGTPCD (69 aa).

This sequence belongs to the methylthiotransferase family. MiaB subfamily. As to quaternary structure, monomer. The cofactor is [4Fe-4S] cluster.

It localises to the cytoplasm. The catalysed reaction is N(6)-dimethylallyladenosine(37) in tRNA + (sulfur carrier)-SH + AH2 + 2 S-adenosyl-L-methionine = 2-methylsulfanyl-N(6)-dimethylallyladenosine(37) in tRNA + (sulfur carrier)-H + 5'-deoxyadenosine + L-methionine + A + S-adenosyl-L-homocysteine + 2 H(+). Its function is as follows. Catalyzes the methylthiolation of N6-(dimethylallyl)adenosine (i(6)A), leading to the formation of 2-methylthio-N6-(dimethylallyl)adenosine (ms(2)i(6)A) at position 37 in tRNAs that read codons beginning with uridine. This is tRNA-2-methylthio-N(6)-dimethylallyladenosine synthase from Prochlorococcus marinus (strain MIT 9303).